A 249-amino-acid polypeptide reads, in one-letter code: Galactan endo-beta-1,3-galactanase (249 aa).

An N-terminal signal peptide occupies residues 1-21; the sequence is MKLFVVLACLAAPGTFPFVDA. Residues 34-247 enclose the GH16 domain; sequence STYWNNFYPW…KARNVQVTRT (214 aa). Asn48 carries N-linked (GlcNAc...) asparagine glycosylation. Glu138 acts as the Nucleophile in catalysis. The Proton donor role is filled by Glu143. N-linked (GlcNAc...) asparagine glycosylation is present at Asn156.

This sequence belongs to the glycosyl hydrolase 16 family. N-glycosylated.

It carries out the reaction The enzyme specifically hydrolyzes beta-1,3-galactan and beta-1,3-galactooligosaccharides.. Specifically hydrolyzes beta-1,3-galactan in an endo-fashion. Requires at least 3 contiguous beta-1,3-residues. This chain is Galactan endo-beta-1,3-galactanase (EN3GAL), found in Flammulina velutipes (Agaricus velutipes).